The chain runs to 161 residues: Nucleotide-binding protein PputGB1_4497 (161 aa).

The protein belongs to the YajQ family.

Functionally, nucleotide-binding protein. This is Nucleotide-binding protein PputGB1_4497 from Pseudomonas putida (strain GB-1).